A 352-amino-acid chain; its full sequence is MGFAEWRLRNKYWTIYIVPLVVLLLMIYGTWAYCHKLCYERVYRDFGHKATAIGLICTCCVLDALIIAIWVLIVSCGPGHQPGVAPHLLVDSADLENTTVAPNCYQSDPHGYPVWCSNCQSLKVGRTKHSSHQGHCVPRFDHYCVWLGAVIGFKNYRLFVQFVFYFAVLLMIVWITISVYIRDIRQYHARLNANLIVLLIISGIGWLMTSGLFVSYIYYMSQNLTSIEVIDLKKRKRTPELSMQRLYCYYNSDDHYRYVVKLDNDFKGSVYKKHWLKNIKEFMGSNPMLWFIPLPQYWHESPLANGERDVNTIVSPYQEEVGPHTIDYIKKRIESGEYIHKFKEPGREKTHL.

Transmembrane regions (helical) follow at residues 12–32 (YWTI…GTWA) and 53–73 (IGLI…WVLI). The DHHC domain occupies 114–164 (VWCSNCQSLKVGRTKHSSHQGHCVPRFDHYCVWLGAVIGFKNYRLFVQFVF). C144 serves as the catalytic S-palmitoyl cysteine intermediate. Transmembrane regions (helical) follow at residues 159 to 179 (FVQF…TISV) and 195 to 215 (LIVL…LFVS).

Belongs to the DHHC palmitoyltransferase family. PFA5 subfamily.

It is found in the membrane. The enzyme catalyses L-cysteinyl-[protein] + hexadecanoyl-CoA = S-hexadecanoyl-L-cysteinyl-[protein] + CoA. The sequence is that of Palmitoyltransferase PFA5 (PFA5) from Candida glabrata (strain ATCC 2001 / BCRC 20586 / JCM 3761 / NBRC 0622 / NRRL Y-65 / CBS 138) (Yeast).